Consider the following 301-residue polypeptide: Putative S-adenosyl-L-methionine-dependent methyltransferase MUL_0450 (301 aa).

S-adenosyl-L-methionine is bound by residues D127 and 156–157; that span reads DL.

It belongs to the UPF0677 family.

Exhibits S-adenosyl-L-methionine-dependent methyltransferase activity. This chain is Putative S-adenosyl-L-methionine-dependent methyltransferase MUL_0450, found in Mycobacterium ulcerans (strain Agy99).